A 415-amino-acid chain; its full sequence is Probable glucuronosyltransferase Os01g0926600 (415 aa).

The Cytoplasmic segment spans residues 1 to 4 (MAMR). Residues 5-25 (LSSAAVALALLLAATALEDVA) traverse the membrane as a helical; Signal-anchor for type II membrane protein segment. At 26 to 415 (RGQDTERIEG…QGPVGDLKPW (390 aa)) the chain is on the lumenal side. Residues Asn142 and Asn403 are each glycosylated (N-linked (GlcNAc...) asparagine).

The protein belongs to the glycosyltransferase 47 family.

It localises to the golgi apparatus membrane. Its function is as follows. Involved in the synthesis of glucuronoxylan hemicellulose in secondary cell walls. This Oryza sativa subsp. japonica (Rice) protein is Probable glucuronosyltransferase Os01g0926600.